The chain runs to 122 residues: Protein FAM223B (122 aa).

Belongs to the FAM223 family.

The sequence is that of Protein FAM223B (FAM223B) from Homo sapiens (Human).